A 62-amino-acid polypeptide reads, in one-letter code: Small ribosomal subunit protein eS27 (62 aa).

Positions 17, 20, 36, and 39 each coordinate Zn(2+). A C4-type zinc finger spans residues 17–39 (CPDCENEQLVFEKATSVVECTVC).

This sequence belongs to the eukaryotic ribosomal protein eS27 family. Part of the 30S ribosomal subunit. Zn(2+) serves as cofactor.

The sequence is that of Small ribosomal subunit protein eS27 from Methanocorpusculum labreanum (strain ATCC 43576 / DSM 4855 / Z).